The chain runs to 427 residues: Tuberculostearic acid methyltransferase UfaA1 (427 aa).

This sequence belongs to the CFA/CMAS family.

Its pathway is lipid metabolism; fatty acid biosynthesis. With respect to regulation, inhibited by S-adenosyl-L-homocysteine. Its function is as follows. Involved in the biosynthesis of the tuberculostearic acid (10-methylstearic-acid or TSA), a constituent lipid of the mycobacterial cell wall. Catalyzes the transfer of the methyl group from S-adenosyl-L-methionine (SAM) to the double bond of oleic acid in phosphatidylethanolamine or phosphatidylcholine to produce TSA. The chain is Tuberculostearic acid methyltransferase UfaA1 from Mycobacterium tuberculosis (strain ATCC 25618 / H37Rv).